The primary structure comprises 316 residues: MAEVKVKVQPPDADPVEIENRIIELCHQFPHGITDQVIQNEMPHIEAQQRAVAINRLLSMGQLDLLRSNTGLLYRIKDSQNAGKMKGSDNQEKLVYQIIEDAGNKGIWSRDIRYKSNLPLTEINKILKNLESKKLIKAVKSVAASKKKVYMLYNLQPDRSVTGGAWYSDQDFESEFVEVLNQQCFKFLQNKAETARESKQNPMIQRNSSFASSHEVWKYICELGISKVELSMEDIETILNTLIYDGKVEMTIIAAKEGTVGSVDGHMKLYRAVSPIIPPTGLVRAPCGLCPVFDDCHEGGEISPSNCIYMTEWLEF.

Position 2 is an N-acetylalanine (alanine 2). Glycyl lysine isopeptide (Lys-Gly) (interchain with G-Cter in SUMO2) cross-links involve residues lysine 5 and lysine 7. [4Fe-4S] cluster is bound by residues cysteine 287, cysteine 290, cysteine 296, and cysteine 307.

This sequence belongs to the eukaryotic RPC34/RPC39 RNA polymerase subunit family. Component of the RNA polymerase III complex consisting of 17 subunits: a ten-subunit horseshoe-shaped catalytic core composed of POLR3A/RPC1, POLR3B/RPC2, POLR1C/RPAC1, POLR1D/RPAC2, POLR3K/RPC10, POLR2E/RPABC1, POLR2F/RPABC2, POLR2H/RPABC3, POLR2K/RPABC4 and POLR2L/RPABC5; a mobile stalk composed of two subunits POLR3H/RPC8 and CRCP/RPC9, protruding from the core and functioning primarily in transcription initiation; and additional subunits homologous to general transcription factors of the RNA polymerase II machinery, POLR3C/RPC3-POLR3F/RPC6-POLR3G/RPC7 heterotrimer required for transcription initiation and POLR3D/RPC4-POLR3E/RPC5 heterodimer involved in both transcription initiation and termination. Directly interacts with POLR3C. Interacts with TBP and TFIIIB90 and GTF3C4. Interacts with MAF1. As part of the RNA polymerase III complex, interacts with PKP2.

It is found in the nucleus. DNA-dependent RNA polymerase catalyzes the transcription of DNA into RNA using the four ribonucleoside triphosphates as substrates. Specific peripheric component of RNA polymerase III (Pol III) which synthesizes small non-coding RNAs including 5S rRNA, snRNAs, tRNAs and miRNAs from at least 500 distinct genomic loci. Part of POLR3C/RPC3-POLR3F/RPC6-POLR3G/RPC7 heterotrimer that coordinates the dynamics of Pol III stalk and clamp modules during the transition from apo to elongation state. Pol III plays a key role in sensing and limiting infection by intracellular bacteria and DNA viruses, including varicella zoster virus. Acts as a nuclear and cytosolic DNA sensor detecting AT-rich DNA, involved in innate immune response. Can sense non-self dsDNA that serves as template for transcription into dsRNA. The non-self RNA polymerase III transcripts, such as Epstein-Barr virus-encoded RNAs (EBERs) induce type I interferon and NF-kappa-B through the RIG-I pathway. Preferentially binds double-stranded DNA (dsDNA). The protein is DNA-directed RNA polymerase III subunit RPC6 (POLR3F) of Bos taurus (Bovine).